The primary structure comprises 108 residues: ATP synthase peripheral stalk subunit F6, mitochondrial (108 aa).

The transit peptide at 1–32 (MILQRLFRFSSVIRSAVSVHLRRNIGVTAVAF) directs the protein to the mitochondrion. Lys-41 and Lys-46 each carry N6-acetyllysine. The residue at position 65 (Ser-65) is a Phosphoserine. Lys-79 is modified (N6-acetyllysine). N6-acetyllysine; alternate occurs at positions 94 and 99. An N6-succinyllysine; alternate mark is found at Lys-94 and Lys-99. Lys-105 is modified (N6-acetyllysine).

This sequence belongs to the eukaryotic ATPase subunit F6 family. Component of the ATP synthase complex composed at least of ATP5F1A/subunit alpha, ATP5F1B/subunit beta, ATP5MC1/subunit c (homooctomer), MT-ATP6/subunit a, MT-ATP8/subunit 8, ATP5ME/subunit e, ATP5MF/subunit f, ATP5MG/subunit g, ATP5MK/subunit k, ATP5MJ/subunit j, ATP5F1C/subunit gamma, ATP5F1D/subunit delta, ATP5F1E/subunit epsilon, ATP5PF/subunit F6, ATP5PB/subunit b, ATP5PD/subunit d, ATP5PO/subunit OSCP. ATP synthase complex consists of a soluble F(1) head domain (subunits alpha(3) and beta(3)) - the catalytic core - and a membrane F(0) domain - the membrane proton channel (subunits c, a, 8, e, f, g, k and j). These two domains are linked by a central stalk (subunits gamma, delta, and epsilon) rotating inside the F1 region and a stationary peripheral stalk (subunits F6, b, d, and OSCP).

Its subcellular location is the mitochondrion. The protein localises to the mitochondrion inner membrane. Subunit F6, of the mitochondrial membrane ATP synthase complex (F(1)F(0) ATP synthase or Complex V) that produces ATP from ADP in the presence of a proton gradient across the membrane which is generated by electron transport complexes of the respiratory chain. ATP synthase complex consist of a soluble F(1) head domain - the catalytic core - and a membrane F(1) domain - the membrane proton channel. These two domains are linked by a central stalk rotating inside the F(1) region and a stationary peripheral stalk. During catalysis, ATP synthesis in the catalytic domain of F(1) is coupled via a rotary mechanism of the central stalk subunits to proton translocation. In vivo, can only synthesize ATP although its ATP hydrolase activity can be activated artificially in vitro. Part of the complex F(0) domain. Part of the complex F(0) domain and the peripheric stalk, which acts as a stator to hold the catalytic alpha(3)beta(3) subcomplex and subunit a/ATP6 static relative to the rotary elements. This chain is ATP synthase peripheral stalk subunit F6, mitochondrial, found in Homo sapiens (Human).